We begin with the raw amino-acid sequence, 196 residues long: Holliday junction branch migration complex subunit RuvA (196 aa).

Positions 1-61 (MYEYFEGIVT…DTGITLYGFQ (61 aa)) are domain I. The tract at residues 62–140 (SEDDKGLFLK…DYVARLDRQD (79 aa)) is domain II. Positions 141 to 149 (EEQGNISPA) are flexible linker. The tract at residues 149-196 (ALNDALLALIALGYTQKEVDRITTKLEEVNADTADQYIKKGLALLLKK) is domain III.

It belongs to the RuvA family. As to quaternary structure, homotetramer. Forms an RuvA(8)-RuvB(12)-Holliday junction (HJ) complex. HJ DNA is sandwiched between 2 RuvA tetramers; dsDNA enters through RuvA and exits via RuvB. An RuvB hexamer assembles on each DNA strand where it exits the tetramer. Each RuvB hexamer is contacted by two RuvA subunits (via domain III) on 2 adjacent RuvB subunits; this complex drives branch migration. In the full resolvosome a probable DNA-RuvA(4)-RuvB(12)-RuvC(2) complex forms which resolves the HJ.

It localises to the cytoplasm. In terms of biological role, the RuvA-RuvB-RuvC complex processes Holliday junction (HJ) DNA during genetic recombination and DNA repair, while the RuvA-RuvB complex plays an important role in the rescue of blocked DNA replication forks via replication fork reversal (RFR). RuvA specifically binds to HJ cruciform DNA, conferring on it an open structure. The RuvB hexamer acts as an ATP-dependent pump, pulling dsDNA into and through the RuvAB complex. HJ branch migration allows RuvC to scan DNA until it finds its consensus sequence, where it cleaves and resolves the cruciform DNA. The chain is Holliday junction branch migration complex subunit RuvA from Lactobacillus helveticus (strain DPC 4571).